A 233-amino-acid polypeptide reads, in one-letter code: Ribonuclease HII (233 aa).

The RNase H type-2 domain occupies 26 to 215 (QLVAGIDEVG…VRASEGEGLE (190 aa)). The a divalent metal cation site is built by Asp-32, Glu-33, and Asp-124. Residues 211–233 (GEGLETAAGRQSSEGKKGRRPRG) are disordered.

The protein belongs to the RNase HII family. Mn(2+) serves as cofactor. The cofactor is Mg(2+).

It is found in the cytoplasm. The enzyme catalyses Endonucleolytic cleavage to 5'-phosphomonoester.. Its function is as follows. Endonuclease that specifically degrades the RNA of RNA-DNA hybrids. This Syntrophobacter fumaroxidans (strain DSM 10017 / MPOB) protein is Ribonuclease HII.